Reading from the N-terminus, the 343-residue chain is 3-isopropylmalate dehydrogenase (343 aa).

Residues Arg94, Arg104, Arg128, and Asp218 each contribute to the substrate site. Residues Asp218, Asp242, and Asp246 each coordinate Mg(2+). NAD(+) is bound at residue 278 to 290; the sequence is GSAPDIAGQNKAN.

This sequence belongs to the isocitrate and isopropylmalate dehydrogenases family. LeuB type 2 subfamily. Homodimer. Mg(2+) serves as cofactor. Requires Mn(2+) as cofactor.

The protein localises to the cytoplasm. It carries out the reaction (2R,3S)-3-isopropylmalate + NAD(+) = 4-methyl-2-oxopentanoate + CO2 + NADH. Its pathway is amino-acid biosynthesis; L-leucine biosynthesis; L-leucine from 3-methyl-2-oxobutanoate: step 3/4. Functionally, catalyzes the oxidation of 3-carboxy-2-hydroxy-4-methylpentanoate (3-isopropylmalate) to 3-carboxy-4-methyl-2-oxopentanoate. The product decarboxylates to 4-methyl-2 oxopentanoate. The polypeptide is 3-isopropylmalate dehydrogenase (Bifidobacterium longum (strain DJO10A)).